A 146-amino-acid chain; its full sequence is Hemoglobin subunit beta (146 aa).

At Val1 the chain carries N-acetylvaline. The Globin domain occupies 2–146; that stretch reads QLSGEEKAAV…VANALAHKYH (145 aa). The residue at position 44 (Ser44) is a Phosphoserine. Residue Lys59 is modified to N6-acetyllysine. His63 provides a ligand contact to heme b. An N6-acetyllysine modification is found at Lys82. His92 provides a ligand contact to heme b. Cys93 is subject to S-nitrosocysteine. Residue Lys144 is modified to N6-acetyllysine.

The protein belongs to the globin family. In terms of assembly, heterotetramer of two alpha chains and two beta chains. In terms of tissue distribution, red blood cells.

In terms of biological role, involved in oxygen transport from the lung to the various peripheral tissues. This chain is Hemoglobin subunit beta (HBB), found in Equus caballus (Horse).